A 406-amino-acid chain; its full sequence is Putative 12-oxophytodienoate reductase 12 (406 aa).

FMN contacts are provided by residues 41 to 43, Ala74, and Gln119; that span reads PLT. Residue 188 to 191 coordinates substrate; sequence HAAN. FMN contacts are provided by residues Arg240, Gly317, and 338–339; that span reads GR.

It belongs to the NADH:flavin oxidoreductase/NADH oxidase family. FMN serves as cofactor.

Putative oxophytodienoate reductase that may be involved in the biosynthesis or metabolism of oxylipin signaling molecules. The protein is Putative 12-oxophytodienoate reductase 12 (OPR12) of Oryza sativa subsp. japonica (Rice).